We begin with the raw amino-acid sequence, 154 residues long: UPF0178 protein Glov_0658 (154 aa).

It belongs to the UPF0178 family.

This chain is UPF0178 protein Glov_0658, found in Trichlorobacter lovleyi (strain ATCC BAA-1151 / DSM 17278 / SZ) (Geobacter lovleyi).